The sequence spans 279 residues: NADPH-dependent 7-cyano-7-deazaguanine reductase (279 aa).

86–88 provides a ligand contact to substrate; the sequence is IES. 88-89 is an NADPH binding site; that stretch reads SK. Catalysis depends on Cys187, which acts as the Thioimide intermediate. Asp194 (proton donor) is an active-site residue. Residue 226–227 participates in substrate binding; sequence HE. Residue 255–256 participates in NADPH binding; it reads RG.

This sequence belongs to the GTP cyclohydrolase I family. QueF type 2 subfamily. As to quaternary structure, homodimer.

The protein localises to the cytoplasm. The catalysed reaction is 7-aminomethyl-7-carbaguanine + 2 NADP(+) = 7-cyano-7-deazaguanine + 2 NADPH + 3 H(+). The protein operates within tRNA modification; tRNA-queuosine biosynthesis. Its function is as follows. Catalyzes the NADPH-dependent reduction of 7-cyano-7-deazaguanine (preQ0) to 7-aminomethyl-7-deazaguanine (preQ1). This Haemophilus influenzae (strain PittGG) protein is NADPH-dependent 7-cyano-7-deazaguanine reductase.